The following is a 91-amino-acid chain: DNA-directed RNA polymerase subunit omega (91 aa).

Belongs to the RNA polymerase subunit omega family. As to quaternary structure, the RNAP catalytic core consists of 2 alpha, 1 beta, 1 beta' and 1 omega subunit. When a sigma factor is associated with the core the holoenzyme is formed, which can initiate transcription.

It carries out the reaction RNA(n) + a ribonucleoside 5'-triphosphate = RNA(n+1) + diphosphate. Functionally, promotes RNA polymerase assembly. Latches the N- and C-terminal regions of the beta' subunit thereby facilitating its interaction with the beta and alpha subunits. This is DNA-directed RNA polymerase subunit omega from Proteus mirabilis (strain HI4320).